Here is a 1233-residue protein sequence, read N- to C-terminus: uncharacterized protein (1233 aa).

Disordered stretches follow at residues 32–51, 510–529, and 882–915; these read SETS…TPKP, ATTN…PVPD, and EVIE…IERS. Composition is skewed to acidic residues over residues 513-529 and 882-905; these read NEEE…PVPD and EVIE…EDEG. Basic and acidic residues predominate over residues 906-915; that stretch reads DNKQRVIERS.

This is an uncharacterized protein from Dictyostelium discoideum (Social amoeba).